We begin with the raw amino-acid sequence, 815 residues long: Leucine--tRNA ligase (815 aa).

Residues 42–52 carry the 'HIGH' region motif; it reads PYPSGRLHMGH. The 'KMSKS' region motif lies at 571-575; the sequence is KMSKS. Lysine 574 contributes to the ATP binding site.

The protein belongs to the class-I aminoacyl-tRNA synthetase family.

The protein localises to the cytoplasm. The catalysed reaction is tRNA(Leu) + L-leucine + ATP = L-leucyl-tRNA(Leu) + AMP + diphosphate. The polypeptide is Leucine--tRNA ligase (Vesicomyosocius okutanii subsp. Calyptogena okutanii (strain HA)).